The sequence spans 108 residues: Pumilarin (108 aa).

Positions 1 to 38 (MTETKNEIKLHVLFGALAVGFLMLALFSFSLQMLPVAD) are excised as a propeptide. A cross-link (cyclopeptide (Leu-Trp)) is located at residues 39 to 108 (LAKEFGIPGS…KKGRKAVIAW (70 aa)).

In terms of processing, the cross-link permits a high resistance to proteolysis. Is more resistant to specific proteases than to unspecific proteases.

It localises to the secreted. In terms of biological role, cyclopeptide antibiotic that inhibits both Gram-positive and Gram-negative bacteria. Shows potent to weak activities against M.flavus (MIC=3 ug/ml), B.cereus (MIC=12 ug/ml), B.pumilus (MIC=12 ug/ml), E.coli (MIC=12 ug/ml), and S.pneumoniae (MIC=47 ug/ml). May act by forming pores. The polypeptide is Pumilarin (Bacillus safensis).